Here is a 435-residue protein sequence, read N- to C-terminus: 3-phosphoshikimate 1-carboxyvinyltransferase (435 aa).

Lys-22, Ser-23, and Arg-27 together coordinate 3-phosphoshikimate. Lys-22 provides a ligand contact to phosphoenolpyruvate. Phosphoenolpyruvate contacts are provided by Gly-95 and Arg-123. 4 residues coordinate 3-phosphoshikimate: Ser-168, Gln-170, Asp-319, and Lys-346. Gln-170 contacts phosphoenolpyruvate. Asp-319 serves as the catalytic Proton acceptor. 2 residues coordinate phosphoenolpyruvate: Arg-350 and Arg-393.

Belongs to the EPSP synthase family. Monomer.

It is found in the cytoplasm. It carries out the reaction 3-phosphoshikimate + phosphoenolpyruvate = 5-O-(1-carboxyvinyl)-3-phosphoshikimate + phosphate. It functions in the pathway metabolic intermediate biosynthesis; chorismate biosynthesis; chorismate from D-erythrose 4-phosphate and phosphoenolpyruvate: step 6/7. Catalyzes the transfer of the enolpyruvyl moiety of phosphoenolpyruvate (PEP) to the 5-hydroxyl of shikimate-3-phosphate (S3P) to produce enolpyruvyl shikimate-3-phosphate and inorganic phosphate. The chain is 3-phosphoshikimate 1-carboxyvinyltransferase from Chloroflexus aggregans (strain MD-66 / DSM 9485).